Consider the following 538-residue polypeptide: CTP synthase (538 aa).

Residues 1 to 270 (MSRTKFIFVT…DEVVLKTMGM (270 aa)) form an amidoligase domain region. CTP is bound at residue S15. A UTP-binding site is contributed by S15. 16 to 21 (SLGKGV) contributes to the ATP binding site. Residue Y56 participates in L-glutamine binding. D73 is a binding site for ATP. Mg(2+) is bound by residues D73 and E143. CTP is bound by residues 150 to 152 (DIE), 190 to 195 (KTKPTQ), and K226. Residues 190–195 (KTKPTQ) and K226 each bind UTP. Residues 295 to 537 (QIAVVGKYIS…IRASVKYSKK (243 aa)) form the Glutamine amidotransferase type-1 domain. G357 serves as a coordination point for L-glutamine. The active-site Nucleophile; for glutamine hydrolysis is the C384. Residues 385-388 (LGMQ), E408, and R465 each bind L-glutamine. Active-site residues include H510 and E512.

The protein belongs to the CTP synthase family. In terms of assembly, homotetramer.

It catalyses the reaction UTP + L-glutamine + ATP + H2O = CTP + L-glutamate + ADP + phosphate + 2 H(+). The enzyme catalyses L-glutamine + H2O = L-glutamate + NH4(+). The catalysed reaction is UTP + NH4(+) + ATP = CTP + ADP + phosphate + 2 H(+). It participates in pyrimidine metabolism; CTP biosynthesis via de novo pathway; CTP from UDP: step 2/2. Its activity is regulated as follows. Allosterically activated by GTP, when glutamine is the substrate; GTP has no effect on the reaction when ammonia is the substrate. The allosteric effector GTP functions by stabilizing the protein conformation that binds the tetrahedral intermediate(s) formed during glutamine hydrolysis. Inhibited by the product CTP, via allosteric rather than competitive inhibition. In terms of biological role, catalyzes the ATP-dependent amination of UTP to CTP with either L-glutamine or ammonia as the source of nitrogen. Regulates intracellular CTP levels through interactions with the four ribonucleotide triphosphates. This chain is CTP synthase, found in Leptospira interrogans serogroup Icterohaemorrhagiae serovar copenhageni (strain Fiocruz L1-130).